A 302-amino-acid chain; its full sequence is Sulfate adenylyltransferase subunit 2 (302 aa).

It belongs to the PAPS reductase family. CysD subfamily. Heterodimer composed of CysD, the smaller subunit, and CysN.

The enzyme catalyses sulfate + ATP + H(+) = adenosine 5'-phosphosulfate + diphosphate. The protein operates within sulfur metabolism; hydrogen sulfide biosynthesis; sulfite from sulfate: step 1/3. In terms of biological role, with CysN forms the ATP sulfurylase (ATPS) that catalyzes the adenylation of sulfate producing adenosine 5'-phosphosulfate (APS) and diphosphate, the first enzymatic step in sulfur assimilation pathway. APS synthesis involves the formation of a high-energy phosphoric-sulfuric acid anhydride bond driven by GTP hydrolysis by CysN coupled to ATP hydrolysis by CysD. This chain is Sulfate adenylyltransferase subunit 2, found in Salmonella agona (strain SL483).